Reading from the N-terminus, the 478-residue chain is Antiviral innate immune response effector IFIT1 (478 aa).

TPR repeat units follow at residues 52–85 (VGIH…MQEE), 95–128 (LVTW…CKKL), 141–174 (IDCE…DPEN), 183–216 (ISAY…NPDN), 218–249 (YIKV…NMSS), and 251–284 (TYVF…TPTS). Residue W147 participates in mRNA binding. G190 contributes to the RNA binding site. RNA-binding residues include K259, H289, Q290, and K336. TPR repeat units follow at residues 305–339 (ATKG…KPTF), 340–373 (EVAH…KPVV), 378–412 (QDIH…EQAS), and 437–470 (LESL…AADF).

It belongs to the IFIT family. As to quaternary structure, component of an interferon-dependent multiprotein complex, at least composed of IFIT1, IFIT2 and IFIT3. Interacts (via TPR repeats 1-4) with RPL15. Interacts with STING1/MITA; could disrupt STING1 interaction with MAVS or TBK1, acting as a negative-feedback regulator of virus-triggered signaling. Interacts with EIF3E; this could be an alternative way to inhibit translation. Phosphorylated. Post-translationally, ISGylated.

The protein resides in the cytoplasm. Plays a key role in the innate immune response as part of an interferon-dependent multiprotein complex, recognizing and sequestering viral RNAs that lack host-specific 2'-O-methylation at their 5' cap. By distinguishing these RNAs from host mRNAs, inhibits their translation by competing with the translation initiation factor eIF4E. Could also prevent viral replication through its interaction with DNA replication origin-binding protein E1 of several viruses. Causes the translocation of E1 from the nucleus to the cytoplasm and can also inhibit its helicase activity in vitro. Exhibits antiviral activity against many viruses from the Flaviviridae (West Nile virus, Dengue virus, hepatitis C virus), Coronaviridae (human 229E coronavirus, SARS-CoV-2 and SARS-CoV), Poxviridae (vaccinia virus) and Togaviridae (Sindbis virus) families. In Homo sapiens (Human), this protein is Antiviral innate immune response effector IFIT1.